We begin with the raw amino-acid sequence, 573 residues long: Potassium-transporting ATPase potassium-binding subunit (573 aa).

10 helical membrane-spanning segments follow: residues 6-26, 66-86, 135-155, 177-197, 257-277, 283-303, 382-402, 428-448, 493-513, and 537-557; these read ILFA…GSYI, FFSL…ILLL, ALAV…IALI, VFWI…FQGV, IQMV…GKWV, GWLI…VMTI, IFGG…LAVF, MFAL…AAVI, ITIA…VIML, and FIFA…TIFP.

The protein belongs to the KdpA family. The system is composed of three essential subunits: KdpA, KdpB and KdpC.

Its subcellular location is the cell inner membrane. In terms of biological role, part of the high-affinity ATP-driven potassium transport (or Kdp) system, which catalyzes the hydrolysis of ATP coupled with the electrogenic transport of potassium into the cytoplasm. This subunit binds the periplasmic potassium ions and delivers the ions to the membrane domain of KdpB through an intramembrane tunnel. This is Potassium-transporting ATPase potassium-binding subunit from Francisella tularensis subsp. tularensis (strain WY96-3418).